The following is a 328-amino-acid chain: RNA 3'-terminal phosphate cyclase (328 aa).

Residues Gln-100 and 276–280 contribute to the ATP site; that span reads HLADQ. His-302 (tele-AMP-histidine intermediate) is an active-site residue.

The protein belongs to the RNA 3'-terminal cyclase family. Type 1 subfamily.

The protein resides in the cytoplasm. It carries out the reaction a 3'-end 3'-phospho-ribonucleotide-RNA + ATP = a 3'-end 2',3'-cyclophospho-ribonucleotide-RNA + AMP + diphosphate. Its function is as follows. Catalyzes the conversion of 3'-phosphate to a 2',3'-cyclic phosphodiester at the end of RNA. The mechanism of action of the enzyme occurs in 3 steps: (A) adenylation of the enzyme by ATP; (B) transfer of adenylate to an RNA-N3'P to produce RNA-N3'PP5'A; (C) and attack of the adjacent 2'-hydroxyl on the 3'-phosphorus in the diester linkage to produce the cyclic end product. The biological role of this enzyme is unknown but it is likely to function in some aspects of cellular RNA processing. In Archaeoglobus fulgidus (strain ATCC 49558 / DSM 4304 / JCM 9628 / NBRC 100126 / VC-16), this protein is RNA 3'-terminal phosphate cyclase (rtcA).